Here is a 699-residue protein sequence, read N- to C-terminus: Endogenous retrovirus group K member 8 Env polyprotein (699 aa).

Residues 1 to 47 (MNPSEMQRKAPPRRRRHRNRAPLTHKMNKMVTSEEQMKLPSTKKAEP) are disordered. Residues 1–89 (MNPSEMQRKA…ALMIVSMVVS (89 aa)) form the signal peptide. Residues 10–20 (APPRRRRHRNR) show a composition bias toward basic residues. Topologically, residues 90 to 632 (LPMPAGAAVA…NLNPVTWVKT (543 aa)) are extracellular. Residues asparagine 100, asparagine 128, asparagine 153, asparagine 274, asparagine 355, asparagine 372, and asparagine 461 are each glycosylated (N-linked (GlcNAc...) asparagine). The interval 466 to 486 (FIFTLIAVIMGLIAVTATAAV) is fusion peptide. N-linked (GlcNAc...) asparagine glycosylation is found at asparagine 507, asparagine 554, asparagine 566, and asparagine 585. The helical transmembrane segment at 633–653 (IGSTTIINLILILVCLFCLLL) threads the bilayer. The Cytoplasmic segment spans residues 654–699 (VCRCTQQLRRDSDHRERAMMTMAVLSKRKGGNVGKSKRDQIVTVSV).

The protein belongs to the beta type-B retroviral envelope protein family. HERV class-II K(HML-2) env subfamily. In terms of assembly, the surface (SU) and transmembrane (TM) proteins form a heterodimer. SU and TM are attached by noncovalent interactions or by a labile interchain disulfide bond. Post-translationally, specific enzymatic cleavages in vivo yield the mature SU and TM proteins.

It localises to the cell membrane. The protein localises to the virion. Retroviral envelope proteins mediate receptor recognition and membrane fusion during early infection. Endogenous envelope proteins may have kept, lost or modified their original function during evolution. This endogenous envelope protein has lost its original fusogenic properties. In terms of biological role, SU mediates receptor recognition. Functionally, TM anchors the envelope heterodimer to the viral membrane through one transmembrane domain. The other hydrophobic domain, called fusion peptide, mediates fusion of the viral membrane with the target cell membrane. This chain is Endogenous retrovirus group K member 8 Env polyprotein (ERVK-8), found in Homo sapiens (Human).